The chain runs to 196 residues: Penicillin-binding protein activator LpoB (196 aa).

An N-terminal signal peptide occupies residues 1–16; the sequence is MKKYLGIVLMALVIAG. Cysteine 17 is lipidated: N-palmitoyl cysteine. A lipid anchor (S-diacylglycerol cysteine) is attached at cysteine 17. Residues 24–54 form a disordered region; it reads TEQPATIEPAVPTPSKPQLPPSESQPLPTPP. Residues 34–43 show a composition bias toward pro residues; sequence VPTPSKPQLP.

It belongs to the LpoB family. Interacts with PBP1b.

It localises to the cell outer membrane. Regulator of peptidoglycan synthesis that is essential for the function of penicillin-binding protein 1B (PBP1b). The protein is Penicillin-binding protein activator LpoB of Dickeya dadantii (strain 3937) (Erwinia chrysanthemi (strain 3937)).